Here is a 338-residue protein sequence, read N- to C-terminus: 1-aminocyclopropane-1-carboxylate deaminase (338 aa).

K51 bears the N6-(pyridoxal phosphate)lysine mark. The active-site Nucleophile is S78.

This sequence belongs to the ACC deaminase/D-cysteine desulfhydrase family. As to quaternary structure, homotrimer. Pyridoxal 5'-phosphate serves as cofactor.

The catalysed reaction is 1-aminocyclopropane-1-carboxylate + H2O = 2-oxobutanoate + NH4(+). Functionally, catalyzes a cyclopropane ring-opening reaction, the irreversible conversion of 1-aminocyclopropane-1-carboxylate (ACC) to ammonia and alpha-ketobutyrate. Allows growth on ACC as a nitrogen source. The chain is 1-aminocyclopropane-1-carboxylate deaminase from Burkholderia pseudomallei (strain 1106a).